The chain runs to 430 residues: Serine--tRNA ligase (430 aa).

237 to 239 (TAE) serves as a coordination point for L-serine. 268–270 (RSE) lines the ATP pocket. An L-serine-binding site is contributed by glutamate 291. 355–358 (EISS) serves as a coordination point for ATP. Serine 391 contacts L-serine.

Belongs to the class-II aminoacyl-tRNA synthetase family. Type-1 seryl-tRNA synthetase subfamily. As to quaternary structure, homodimer. The tRNA molecule binds across the dimer.

The protein resides in the cytoplasm. It catalyses the reaction tRNA(Ser) + L-serine + ATP = L-seryl-tRNA(Ser) + AMP + diphosphate + H(+). It carries out the reaction tRNA(Sec) + L-serine + ATP = L-seryl-tRNA(Sec) + AMP + diphosphate + H(+). The protein operates within aminoacyl-tRNA biosynthesis; selenocysteinyl-tRNA(Sec) biosynthesis; L-seryl-tRNA(Sec) from L-serine and tRNA(Sec): step 1/1. Catalyzes the attachment of serine to tRNA(Ser). Is also able to aminoacylate tRNA(Sec) with serine, to form the misacylated tRNA L-seryl-tRNA(Sec), which will be further converted into selenocysteinyl-tRNA(Sec). This chain is Serine--tRNA ligase, found in Cronobacter sakazakii (strain ATCC BAA-894) (Enterobacter sakazakii).